We begin with the raw amino-acid sequence, 136 residues long: Large ribosomal subunit protein bL19 (136 aa).

The protein belongs to the bacterial ribosomal protein bL19 family.

This protein is located at the 30S-50S ribosomal subunit interface and may play a role in the structure and function of the aminoacyl-tRNA binding site. This Xylella fastidiosa (strain M23) protein is Large ribosomal subunit protein bL19.